The following is a 402-amino-acid chain: Mitochondrial inner membrane protein OXA1 (402 aa).

A mitochondrion-targeting transit peptide spans 1 to 42 (MFKLTSRLVTSRFAASSRLATARTIVLPRPHPSWISFQAKRF). Topologically, residues 43–118 (NSTGPNANDV…PSDIIQHVLE (76 aa)) are mitochondrial intermembrane. The chain crosses the membrane as a helical span at residues 119–139 (AVHVYSGLPWWGTIAATTILI). The Mitochondrial matrix segment spans residues 140–199 (RCLMFPLYVKSSDTVARNSHIKPELDALNNKLMSTTDLQQGQLVAMQRKKLLSSHGIKNR). Residues 200-220 (WLAAPMLQIPIALGFFNALRH) traverse the membrane as a helical segment. The Mitochondrial intermembrane segment spans residues 221-239 (MANYPVDGFANQGVAWFTD). The helical transmembrane segment at 240–260 (LTQADPYLGLQVITAAVFISF) threads the bilayer. At 261 to 275 (TRLGGETGAQQFSSP) the chain is on the mitochondrial matrix side. A helical transmembrane segment spans residues 276–292 (MKRLFTILPIISIPATM). Residues 293–297 (NLSSA) lie on the Mitochondrial intermembrane side of the membrane. The helical transmembrane segment at 298–316 (VVLYFAFNGAFSVLQTMIL) threads the bilayer. Residues 317-402 (RNKWVRSKLK…HKSNFINNKK (86 aa)) lie on the Mitochondrial matrix side of the membrane. The segment covering 366–385 (RQLMQDNEKKLQESFKEKRQ) has biased composition (basic and acidic residues). A disordered region spans residues 366–386 (RQLMQDNEKKLQESFKEKRQN).

Belongs to the OXA1/ALB3/YidC family. Interacts with the large ribosome subunit of mitochondrial ribosome. Interacts directly with MRP20. Interacts with OXA1.

The protein localises to the mitochondrion inner membrane. Its function is as follows. Mitochondrial inner membrane insertase that mediates the insertion of both mitochondrion-encoded precursors and nuclear-encoded proteins from the matrix into the inner membrane. Links mitoribosomes with the inner membrane. Forms pores capable of accommodating translocating protein segments. Essential for the activity and assembly of cytochrome c oxidase. Plays a central role in the translocation and export of the N-terminal part of the COX2 protein into the mitochondrial intermembrane space. This chain is Mitochondrial inner membrane protein OXA1, found in Saccharomyces cerevisiae (strain ATCC 204508 / S288c) (Baker's yeast).